The sequence spans 136 residues: Crossover junction endodeoxyribonuclease Hjc (136 aa).

Residue Glu-9 participates in Mg(2+) binding. Residue Ser-29 is part of the active site. Asp-38 and Glu-51 together coordinate Mg(2+).

The protein belongs to the Holliday junction resolvase Hjc family. Homodimer. Mg(2+) serves as cofactor.

It catalyses the reaction Endonucleolytic cleavage at a junction such as a reciprocal single-stranded crossover between two homologous DNA duplexes (Holliday junction).. Its function is as follows. A structure-specific endonuclease that resolves Holliday junction (HJ) intermediates during genetic recombination. Cleaves 4-way DNA junctions introducing paired nicks in opposing strands, leaving a 5'-terminal phosphate and a 3'-terminal hydroxyl group that are subsequently ligated to produce recombinant products. The polypeptide is Crossover junction endodeoxyribonuclease Hjc (Archaeoglobus fulgidus (strain ATCC 49558 / DSM 4304 / JCM 9628 / NBRC 100126 / VC-16)).